A 93-amino-acid chain; its full sequence is Small ribosomal subunit protein uS19 (93 aa).

The protein belongs to the universal ribosomal protein uS19 family.

Its function is as follows. Protein S19 forms a complex with S13 that binds strongly to the 16S ribosomal RNA. This is Small ribosomal subunit protein uS19 from Geobacter metallireducens (strain ATCC 53774 / DSM 7210 / GS-15).